Reading from the N-terminus, the 496-residue chain is Cytochrome P450 71D178 (496 aa).

Residues 1 to 21 (MDISISWVVIILLVLSYLILM) traverse the membrane as a helical; Signal-anchor for type II membrane protein segment. Residue Cys435 participates in heme binding.

It belongs to the cytochrome P450 family. The cofactor is heme. As to expression, expressed in flowers, leaves and stems, especially in glandular trichomes.

The protein localises to the membrane. It catalyses the reaction (4S)-limonene + reduced [NADPH--hemoprotein reductase] + O2 = (1S,5R)-carveol + oxidized [NADPH--hemoprotein reductase] + H2O + H(+). It carries out the reaction gamma-terpinene + 2 reduced [NADPH--hemoprotein reductase] + 2 O2 = carvacrol + 2 oxidized [NADPH--hemoprotein reductase] + 3 H2O + 2 H(+). The enzyme catalyses gamma-terpinene + 2 reduced [NADPH--hemoprotein reductase] + 2 O2 = thymol + 2 oxidized [NADPH--hemoprotein reductase] + 3 H2O + 2 H(+). The catalysed reaction is (4R)-limonene + reduced [NADPH--hemoprotein reductase] + O2 = (1R,6S)-isopiperitenol + oxidized [NADPH--hemoprotein reductase] + H2O + H(+). It participates in secondary metabolite biosynthesis; terpenoid biosynthesis. Its function is as follows. Involved in the biosynthesis of phenolic monoterpenes natural products thymol and carvacrol which have a broad range of biological activities acting as antimicrobial compounds, insecticides, antioxidants and pharmaceutical agents. Catalyzes the C2- and C3-hydroxylation of gamma-terpinene to produce carvacrol and thymol, respectively. Also mediates the C6-hydroxylation of (4S)-limonene to form carveol and the C3-hydroxylation of (4R)-limonene to generate (+)-trans-isopiperitenol. The polypeptide is Cytochrome P450 71D178 (Origanum vulgare (Wild marjoram)).